Consider the following 1283-residue polypeptide: Peroxisomal ATPase PEX1 (1283 aa).

Positions 346 to 367 (SKTKQNVLSPEKEKQMSEPLDQ) are disordered. Ser-354 bears the Phosphoserine mark. The span at 355 to 367 (PEKEKQMSEPLDQ) shows a compositional bias: basic and acidic residues. ATP-binding positions include 599 to 606 (GGKGSGKS) and 881 to 888 (GPPGTGKT). Phosphoserine occurs at positions 1181, 1209, and 1211. The disordered stretch occupies residues 1260 to 1283 (FQNPKRRKNQSGTMFRPGQKVTLA).

The protein belongs to the AAA ATPase family. Homooligomer; homooligomerizes in the cytosol, interaction with PEX6 promotes dissociation of the homooligomer. Interacts with PEX6; forming the PEX1-PEX6 AAA ATPase complex, which is composed of a heterohexamer formed by a trimer of PEX1-PEX6 dimers. Interacts indirectly with PEX26, via its interaction with PEX6.

Its subcellular location is the cytoplasm. It localises to the cytosol. The protein localises to the peroxisome membrane. The enzyme catalyses ATP + H2O = ADP + phosphate + H(+). Functionally, component of the PEX1-PEX6 AAA ATPase complex, a protein dislocase complex that mediates the ATP-dependent extraction of the PEX5 receptor from peroxisomal membranes, an essential step for PEX5 recycling. Specifically recognizes PEX5 monoubiquitinated at 'Cys-11', and pulls it out of the peroxisome lumen through the PEX2-PEX10-PEX12 retrotranslocation channel. Extraction by the PEX1-PEX6 AAA ATPase complex is accompanied by unfolding of the TPR repeats and release of bound cargo from PEX5. In Homo sapiens (Human), this protein is Peroxisomal ATPase PEX1.